Consider the following 204-residue polypeptide: Ras-related protein R-Ras2 (204 aa).

Alanine 2 is modified (N-acetylalanine). 21–29 is a binding site for GTP; the sequence is GGGGVGKSA. An Effector region motif is present at residues 43 to 51; sequence YDPTIEDSY. Residues 68 to 72, 127 to 130, and 157 to 159 contribute to the GTP site; these read DTAGQ, NKAD, and SAK. Serine 186 bears the Phosphoserine mark. 4 N6-palmitoyl lysine lipidation sites follow: lysine 192, lysine 194, lysine 196, and lysine 197. The S-palmitoyl cysteine moiety is linked to residue cysteine 199. Cysteine 201 carries the post-translational modification Cysteine methyl ester. Cysteine 201 is lipidated: S-farnesyl cysteine. A propeptide spans 202–204 (removed in mature form); sequence VIF.

Belongs to the small GTPase superfamily. Ras family. As to quaternary structure, interacts with RASSF5. Post-translationally, may be post-translationally modified by both palmitoylation and polyisoprenylation. Fatty-acylation at Lys-192, Lys-194; lys-196 and Lys-197 is required for localization to the plasma membrane and activity. Defatty-acylated by SIRT6, affecting its localization to the plasma membrane. Ubiquitously present in all tissues examined, with the highest levels in heart, placenta, and skeletal muscle. Moderate levels in lung and liver; low levels in brain, kidney, and pancreas.

Its subcellular location is the cell membrane. The protein resides in the golgi apparatus membrane. It carries out the reaction GTP + H2O = GDP + phosphate + H(+). In terms of biological role, GTP-binding protein with GTPase activity, involved in the regulation of MAPK signaling pathway and thereby controlling multiple cellular processes. Regulates craniofacial development. This Homo sapiens (Human) protein is Ras-related protein R-Ras2.